Consider the following 377-residue polypeptide: Probable O-methyltransferase 3 (377 aa).

D241 is a binding site for S-adenosyl-L-methionine. H279 (proton acceptor) is an active-site residue.

This sequence belongs to the class I-like SAM-binding methyltransferase superfamily. Cation-independent O-methyltransferase family. In terms of tissue distribution, highly expressed in lupulin glands. Detected in early-, mid- and late-stage cones.

The chain is Probable O-methyltransferase 3 from Humulus lupulus (European hop).